Consider the following 436-residue polypeptide: 5-methylthioadenosine/S-adenosylhomocysteine deaminase (436 aa).

The Zn(2+) site is built by His-66 and His-68. Glu-95, Arg-147, Arg-161, and His-187 together coordinate substrate. His-214 contacts Zn(2+). Substrate-binding residues include Glu-217 and Asp-303. Asp-303 contributes to the Zn(2+) binding site.

Belongs to the metallo-dependent hydrolases superfamily. MTA/SAH deaminase family. The cofactor is Zn(2+).

The enzyme catalyses S-adenosyl-L-homocysteine + H2O + H(+) = S-inosyl-L-homocysteine + NH4(+). It carries out the reaction S-methyl-5'-thioadenosine + H2O + H(+) = S-methyl-5'-thioinosine + NH4(+). Catalyzes the deamination of 5-methylthioadenosine and S-adenosyl-L-homocysteine into 5-methylthioinosine and S-inosyl-L-homocysteine, respectively. Is also able to deaminate adenosine. This Symbiobacterium thermophilum (strain DSM 24528 / JCM 14929 / IAM 14863 / T) protein is 5-methylthioadenosine/S-adenosylhomocysteine deaminase.